Consider the following 688-residue polypeptide: Methionine--tRNA ligase (688 aa).

The 'HIGH' region motif lies at Pro-13–His-23. The Zn(2+) site is built by Cys-144, Cys-147, Cys-157, and Cys-160. The 'KMSKS' region signature appears at Lys-342–Ser-346. Lys-345 is an ATP binding site. The 107-residue stretch at Asp-582–His-688 folds into the tRNA-binding domain.

This sequence belongs to the class-I aminoacyl-tRNA synthetase family. MetG type 1 subfamily. Homodimer. The cofactor is Zn(2+).

The protein resides in the cytoplasm. The catalysed reaction is tRNA(Met) + L-methionine + ATP = L-methionyl-tRNA(Met) + AMP + diphosphate. In terms of biological role, is required not only for elongation of protein synthesis but also for the initiation of all mRNA translation through initiator tRNA(fMet) aminoacylation. The chain is Methionine--tRNA ligase from Acidovorax sp. (strain JS42).